The primary structure comprises 535 residues: Beta-glucosidase 20 (535 aa).

The first 24 residues, 1–24, serve as a signal peptide directing secretion; that stretch reads MGRFHKFPLLGLVLFLGLTGSLIA. Gln56 and His159 together coordinate a beta-D-glucoside. N-linked (GlcNAc...) asparagine glycosylation occurs at Asn187. 204 to 205 contributes to the a beta-D-glucoside binding site; that stretch reads NE. Glu205 functions as the Proton donor in the catalytic mechanism. A disulfide bond links Cys224 and Cys235. The a beta-D-glucoside site is built by Tyr351 and Glu424. Residue Glu424 is the Nucleophile of the active site. A glycan (N-linked (GlcNAc...) asparagine) is linked at Asn468. A beta-D-glucoside contacts are provided by residues Trp475, 482–483, and Phe491; that span reads EW. Asn501 carries N-linked (GlcNAc...) asparagine glycosylation. The Prevents secretion from ER motif lies at 532–535; the sequence is HDEL.

This sequence belongs to the glycosyl hydrolase 1 family.

The protein localises to the endoplasmic reticulum lumen. It catalyses the reaction Hydrolysis of terminal, non-reducing beta-D-glucosyl residues with release of beta-D-glucose.. In Arabidopsis thaliana (Mouse-ear cress), this protein is Beta-glucosidase 20.